The sequence spans 150 residues: Transcriptional repressor NrdR (150 aa).

A zinc finger lies at 3-33 (CPYCTGESAVIDTRELDNGETIRRRRRCKHC). The region spanning 48-138 (VMVVKKNGDR…VYRSFSDLGK (91 aa)) is the ATP-cone domain.

Belongs to the NrdR family. Requires Zn(2+) as cofactor.

Its function is as follows. Negatively regulates transcription of bacterial ribonucleotide reductase nrd genes and operons by binding to NrdR-boxes. In Herpetosiphon aurantiacus (strain ATCC 23779 / DSM 785 / 114-95), this protein is Transcriptional repressor NrdR.